We begin with the raw amino-acid sequence, 73 residues long: Large ribosomal subunit protein bL31 (73 aa).

It belongs to the bacterial ribosomal protein bL31 family. Type A subfamily. In terms of assembly, part of the 50S ribosomal subunit.

In terms of biological role, binds the 23S rRNA. The chain is Large ribosomal subunit protein bL31 from Rhizobium rhizogenes (strain K84 / ATCC BAA-868) (Agrobacterium radiobacter).